We begin with the raw amino-acid sequence, 1828 residues long: Proteasome activator complex subunit 4 (1828 aa).

HEAT repeat units follow at residues 462–506 (PEGP…LVDC), 985–1024 (NFCC…NHGG), 1164–1202 (YVLP…QLKR), 1339–1377 (DAFL…GSKH), 1621–1659 (PVQV…YNLF), and 1665–1703 (EESV…CNFL). The tract at residues 1635-1723 (ARSSSWHARY…EALCKTRLPK (89 aa)) is bromodomain-like (BRDL).

Belongs to the BLM10 family. As to quaternary structure, homodimer. Interacts with the 20S and 26S proteasomes.

The protein localises to the cytoplasm. Its subcellular location is the cytosol. The protein resides in the nucleus. It localises to the nucleus speckle. In terms of biological role, associated component of the proteasome that specifically recognizes acetylated histones and promotes ATP- and ubiquitin-independent degradation of core histones during DNA damage response. Recognizes and binds acetylated histones via its bromodomain-like (BRDL) region and activates the proteasome by opening the gated channel for substrate entry. Binds to the core proteasome via its C-terminus, which occupies the same binding sites as the proteasomal ATPases, opening the closed structure of the proteasome via an active gating mechanism. involved in DNA damage response in somatic cells: binds to acetylated histones and promotes degradation of histones. The chain is Proteasome activator complex subunit 4 (psme4) from Xenopus laevis (African clawed frog).